The chain runs to 188 residues: GTP cyclohydrolase 1 (188 aa).

The Zn(2+) site is built by Cys76, His79, and Cys148.

It belongs to the GTP cyclohydrolase I family. Toroid-shaped homodecamer, composed of two pentamers of five dimers.

It carries out the reaction GTP + H2O = 7,8-dihydroneopterin 3'-triphosphate + formate + H(+). Its pathway is cofactor biosynthesis; 7,8-dihydroneopterin triphosphate biosynthesis; 7,8-dihydroneopterin triphosphate from GTP: step 1/1. In Caldanaerobacter subterraneus subsp. tengcongensis (strain DSM 15242 / JCM 11007 / NBRC 100824 / MB4) (Thermoanaerobacter tengcongensis), this protein is GTP cyclohydrolase 1.